Consider the following 1144-residue polypeptide: PAN2-PAN3 deadenylation complex catalytic subunit PAN2 (1144 aa).

WD repeat units lie at residues 27 to 66, 153 to 193, 196 to 233, and 302 to 341; these read KKEK…YTRH, SSTY…VIHS, GHSA…NVYD, and HPCK…SGFT. The interval 344-481 is linker; the sequence is AAVLEYQDYP…LLEYKPSNNI (138 aa). The region spanning 482-887 is the USP domain; it reads DIPPAYSKLQ…TPEIVVYSDA (406 aa). The Exonuclease domain occupies 939–1110; the sequence is VALDAEFVSL…EDAHTALLLY (172 aa). Positions 942, 944, 1051, and 1102 each coordinate a divalent metal cation.

The protein belongs to the peptidase C19 family. PAN2 subfamily. Forms a heterotrimer with an asymmetric homodimer of the regulatory subunit PAN3 to form the poly(A)-nuclease (PAN) deadenylation complex. A divalent metal cation is required as a cofactor.

It is found in the cytoplasm. It carries out the reaction Exonucleolytic cleavage of poly(A) to 5'-AMP.. Its activity is regulated as follows. Positively regulated by the regulatory subunit PAN3. Its function is as follows. Catalytic subunit of the poly(A)-nuclease (PAN) deadenylation complex, one of two cytoplasmic mRNA deadenylases involved in mRNA turnover. PAN specifically shortens poly(A) tails of RNA and the activity is stimulated by poly(A)-binding protein PAB1. PAN deadenylation is followed by rapid degradation of the shortened mRNA tails by the CCR4-NOT complex. Deadenylated mRNAs are then degraded by two alternative mechanisms, namely exosome-mediated 3'-5' exonucleolytic degradation, or deadenylation-dependent mRNA decaping and subsequent 5'-3' exonucleolytic degradation by XRN1. May also be involved in post-transcriptional maturation of mRNA poly(A) tails. The sequence is that of PAN2-PAN3 deadenylation complex catalytic subunit PAN2 from Kluyveromyces lactis (strain ATCC 8585 / CBS 2359 / DSM 70799 / NBRC 1267 / NRRL Y-1140 / WM37) (Yeast).